We begin with the raw amino-acid sequence, 111 residues long: Large ribosomal subunit protein uL22 (111 aa).

Belongs to the universal ribosomal protein uL22 family. In terms of assembly, part of the 50S ribosomal subunit.

Its function is as follows. This protein binds specifically to 23S rRNA; its binding is stimulated by other ribosomal proteins, e.g. L4, L17, and L20. It is important during the early stages of 50S assembly. It makes multiple contacts with different domains of the 23S rRNA in the assembled 50S subunit and ribosome. The globular domain of the protein is located near the polypeptide exit tunnel on the outside of the subunit, while an extended beta-hairpin is found that lines the wall of the exit tunnel in the center of the 70S ribosome. This Stenotrophomonas maltophilia (strain R551-3) protein is Large ribosomal subunit protein uL22.